The chain runs to 446 residues: Serine decarboxylase 3 (446 aa).

His162 contacts substrate. Lys274 is modified (N6-(pyridoxal phosphate)lysine).

The protein belongs to the group II decarboxylase family. Requires pyridoxal 5'-phosphate as cofactor.

The catalysed reaction is L-serine + H(+) = ethanolamine + CO2. Functionally, catalyzes the biosynthesis of ethanolamine from serine. Decarboxylation of free serine is the major source of ethanolamine production in plants and ethanolamine metabolism is crucial for the synthesis of choline, phosphatidylethanolamine (PE) and phosphatidylcholine (PC), and thus for plant growth. In Oryza sativa subsp. japonica (Rice), this protein is Serine decarboxylase 3.